The sequence spans 265 residues: 5'-nucleotidase SurE (265 aa).

4 residues coordinate a divalent metal cation: aspartate 8, aspartate 9, serine 40, and asparagine 98.

This sequence belongs to the SurE nucleotidase family. A divalent metal cation is required as a cofactor.

Its subcellular location is the cytoplasm. It carries out the reaction a ribonucleoside 5'-phosphate + H2O = a ribonucleoside + phosphate. Functionally, nucleotidase that shows phosphatase activity on nucleoside 5'-monophosphates. This Trichormus variabilis (strain ATCC 29413 / PCC 7937) (Anabaena variabilis) protein is 5'-nucleotidase SurE.